The sequence spans 341 residues: Annexin A1 isoform p35 (341 aa).

4 Annexin repeats span residues 37-108 (FDPS…ALLK), 109-180 (TPAQ…SLAK), 192-263 (ELAE…ALVK), and 267-338 (SKPA…ALCG).

It belongs to the annexin family. Post-translationally, in contrast to mammalian homologs, does not contain a tyrosine phosphorylation site in the N-terminal part.

The protein localises to the nucleus. Its subcellular location is the cytoplasm. The protein resides in the cell projection. It is found in the cilium. It localises to the basolateral cell membrane. Its function is as follows. Calcium/phospholipid-binding protein which promotes membrane fusion and is involved in exocytosis. This protein regulates phospholipase A2 activity. It seems to bind from two to four calcium ions with high affinity. The sequence is that of Annexin A1 isoform p35 (CP35) from Columba livia (Rock dove).